The sequence spans 577 residues: Arginine--tRNA ligase (577 aa).

The 'HIGH' region signature appears at 122 to 132 (PNVAKEMHVGH).

The protein belongs to the class-I aminoacyl-tRNA synthetase family. In terms of assembly, monomer.

The protein localises to the cytoplasm. The catalysed reaction is tRNA(Arg) + L-arginine + ATP = L-arginyl-tRNA(Arg) + AMP + diphosphate. This Salmonella paratyphi B (strain ATCC BAA-1250 / SPB7) protein is Arginine--tRNA ligase.